The primary structure comprises 165 residues: GTP-dependent dephospho-CoA kinase (165 aa).

GTP contacts are provided by Asp-44, Val-45, Asp-63, Lys-65, Glu-115, and Asp-138.

The protein belongs to the GTP-dependent DPCK family.

It carries out the reaction 3'-dephospho-CoA + GTP = GDP + CoA + H(+). The protein operates within cofactor biosynthesis; coenzyme A biosynthesis. In terms of biological role, catalyzes the GTP-dependent phosphorylation of the 3'-hydroxyl group of dephosphocoenzyme A to form coenzyme A (CoA). In Picrophilus torridus (strain ATCC 700027 / DSM 9790 / JCM 10055 / NBRC 100828 / KAW 2/3), this protein is GTP-dependent dephospho-CoA kinase.